The chain runs to 212 residues: Uridine kinase (212 aa).

13-20 (GASASGKS) contacts ATP.

Belongs to the uridine kinase family.

It localises to the cytoplasm. It catalyses the reaction uridine + ATP = UMP + ADP + H(+). The enzyme catalyses cytidine + ATP = CMP + ADP + H(+). The protein operates within pyrimidine metabolism; CTP biosynthesis via salvage pathway; CTP from cytidine: step 1/3. It participates in pyrimidine metabolism; UMP biosynthesis via salvage pathway; UMP from uridine: step 1/1. This chain is Uridine kinase, found in Shewanella amazonensis (strain ATCC BAA-1098 / SB2B).